The sequence spans 1104 residues: Collagenase ColA (1104 aa).

An N-terminal signal peptide occupies residues 1 to 39 (MKKNLKRGELTKLKLVERWSATFTLAAFILFNSSFKVLA). Residues 40–86 (ADKKVENSNNGQITREINADQISKTELNNEVATDNNRPLGPSIAPSR) constitute a propeptide that is removed on maturation. The segment at 87–761 (ARNNKIYTFD…YVYDVVFHGM (675 aa)) is S1 metalloprotease domain. The tract at residues 93–367 (YTFDELNRMN…AANDLDLNFG (275 aa)) is activator domain. The catalytic subdomain stretch occupies residues 377-646 (DFNKIKADAR…MDSLLNNIDN (270 aa)). Residue Glu-477 participates in Ca(2+) binding. Residue His-502 participates in Zn(2+) binding. The active site involves Glu-503. Residue His-506 participates in Zn(2+) binding. Positions 510, 514, and 516 each coordinate Ca(2+). Residue Glu-534 coordinates Zn(2+). Positions 654-767 (DEYVNGHEAK…FHGMNTDTNT (114 aa)) are helper subdomain. Positions 762-860 (NTDTNTDVHV…KKIKVVEDKP (99 aa)) are S2 domain. Asn-772, Lys-773, Asp-800, Asp-802, Asp-841, Glu-866, Glu-868, Asn-870, Asp-894, Asp-897, Glu-993, Glu-995, Asn-997, Leu-1016, Asp-1020, Lys-1022, and Asp-1023 together coordinate Ca(2+). The 89-residue stretch at 774–862 (EPKAVIKSDS…IKVVEDKPVE (89 aa)) folds into the PKD domain. The segment at 865–979 (NESEPNNDFE…TYTVNVKGNL (115 aa)) is S3a collagen-binding domain. The S3b collagen-binding domain stretch occupies residues 992–1104 (KEVENNNDFD…GNYIVNLQNK (113 aa)).

It belongs to the peptidase M9B family. Collagenase subfamily. Ca(2+) is required as a cofactor. It depends on Zn(2+) as a cofactor.

It localises to the secreted. It catalyses the reaction Digestion of native collagen in the triple helical region at Xaa-|-Gly bonds. With synthetic peptides, a preference is shown for Gly at P3 and P1', Pro and Ala at P2 and P2', and hydroxyproline, Ala or Arg at P3'.. Its function is as follows. Clostridial collagenases are among the most efficient degraders of eukaryotic collagen known; saprophytes use collagen as a carbon source while pathogens additionally digest collagen to aid in host colonization. Has both tripeptidylcarboxypeptidase on Gly-X-Y and endopeptidase activities; the endopeptidase cuts within the triple helix region of collagen while tripeptidylcarboxypeptidase successively digests the exposed ends, thus clostridial collagenases can digest large sections of collagen. The chain is Collagenase ColA (colA) from Clostridium perfringens (strain 13 / Type A).